Consider the following 207-residue polypeptide: Outer-membrane lipoprotein LolB (207 aa).

Positions 1–21 (MPLPDFRLIRLLPLASLVLTA) are cleaved as a signal peptide. A lipid anchor (N-palmitoyl cysteine) is attached at Cys22. A lipid anchor (S-diacylglycerol cysteine) is attached at Cys22.

It belongs to the LolB family. Monomer.

It localises to the cell outer membrane. In terms of biological role, plays a critical role in the incorporation of lipoproteins in the outer membrane after they are released by the LolA protein. In Escherichia fergusonii (strain ATCC 35469 / DSM 13698 / CCUG 18766 / IAM 14443 / JCM 21226 / LMG 7866 / NBRC 102419 / NCTC 12128 / CDC 0568-73), this protein is Outer-membrane lipoprotein LolB.